The chain runs to 1045 residues: Translation initiation factor IF-2 (1045 aa).

Disordered stretches follow at residues 1 to 169 (MSDE…AQAP) and 184 to 451 (QAPA…RGGP). Gly residues predominate over residues 83-94 (SGGGGSSAGGLS). Residues 103–123 (RAIEAAREHQERQAAERRAAE) show a composition bias toward basic and acidic residues. A compositionally biased stretch (low complexity) spans 124–151 (ARAASEAAAARDAAAKSAAAAKAAAAPA). Positions 152-163 (PEAPAAPAPTPA) are enriched in pro residues. Residues 184–199 (QAPAAPVAAAPAAPRA) show a composition bias toward low complexity. Composition is skewed to basic and acidic residues over residues 227-237 (EPSRDRRDDRS) and 302-323 (RNDRPQGDRPQGDRPQGDRPQG). Positions 338–348 (RPAPGARPGPG) are enriched in pro residues. The segment covering 352–363 (GARPGVPASAPA) has biased composition (low complexity). 2 stretches are compositionally biased toward basic and acidic residues: residues 381 to 393 (VGRKPEEDDDRRK) and 438 to 450 (RAREREKEKRRGG). The tr-type G domain occupies 540 to 710 (PRPPVVTVMG…LLLAEVMDLK (171 aa)). The interval 549-556 (GHVDHGKT) is G1. 549-556 (GHVDHGKT) provides a ligand contact to GTP. Residues 574–578 (GITQH) are G2. A G3 region spans residues 596–599 (DTPG). GTP-binding positions include 596–600 (DTPGH) and 650–653 (NKMD). The G4 stretch occupies residues 650–653 (NKMD). Residues 686 to 688 (SAK) form a G5 region.

Belongs to the TRAFAC class translation factor GTPase superfamily. Classic translation factor GTPase family. IF-2 subfamily.

It is found in the cytoplasm. Functionally, one of the essential components for the initiation of protein synthesis. Protects formylmethionyl-tRNA from spontaneous hydrolysis and promotes its binding to the 30S ribosomal subunits. Also involved in the hydrolysis of GTP during the formation of the 70S ribosomal complex. This Caulobacter sp. (strain K31) protein is Translation initiation factor IF-2.